Here is a 153-residue protein sequence, read N- to C-terminus: Small ribosomal subunit protein uS13 (153 aa).

The interval 132–153 (VRGQRTRSHHRKGRTVGVIKKK) is disordered. The segment covering 135 to 153 (QRTRSHHRKGRTVGVIKKK) has biased composition (basic residues).

Belongs to the universal ribosomal protein uS13 family. Part of the 30S ribosomal subunit. Forms a loose heterodimer with protein S19. Forms two bridges to the 50S subunit in the 70S ribosome.

Located at the top of the head of the 30S subunit, it contacts several helices of the 16S rRNA. In the 70S ribosome it contacts the 23S rRNA (bridge B1a) and protein L5 of the 50S subunit (bridge B1b), connecting the 2 subunits; these bridges are implicated in subunit movement. The sequence is that of Small ribosomal subunit protein uS13 from Nanoarchaeum equitans (strain Kin4-M).